A 97-amino-acid polypeptide reads, in one-letter code: Large ribosomal subunit protein eL30 (97 aa).

This sequence belongs to the eukaryotic ribosomal protein eL30 family.

The protein is Large ribosomal subunit protein eL30 of Methanoregula boonei (strain DSM 21154 / JCM 14090 / 6A8).